The primary structure comprises 172 residues: Outer-membrane lipoprotein carrier protein (172 aa).

The N-terminal stretch at 1-16 is a signal peptide; the sequence is MRIALLWVAFGALALA.

It belongs to the LolA family. Monomer.

The protein localises to the periplasm. In terms of biological role, participates in the translocation of lipoproteins from the inner membrane to the outer membrane. Only forms a complex with a lipoprotein if the residue after the N-terminal Cys is not an aspartate (The Asp acts as a targeting signal to indicate that the lipoprotein should stay in the inner membrane). This is Outer-membrane lipoprotein carrier protein from Wolinella succinogenes (strain ATCC 29543 / DSM 1740 / CCUG 13145 / JCM 31913 / LMG 7466 / NCTC 11488 / FDC 602W) (Vibrio succinogenes).